Reading from the N-terminus, the 159-residue chain is Keratin-associated protein 9-8 (159 aa).

15 consecutive repeat copies span residues 8 to 12, 13 to 17, 32 to 36, 37 to 41, 46 to 50, 51 to 55, 56 to 60, 65 to 69, 70 to 74, 75 to 79, 80 to 84, 129 to 133, 134 to 138, 139 to 142, and 153 to 157. Residues 8–157 are 15 X 5 AA repeats of C-C-[RQVSGE]-[SPSNQ]-[TASPI]; the sequence is CCQPTCCRTT…TCVSSCCQPS (150 aa).

It belongs to the KRTAP type 9 family. In terms of assembly, interacts with hair keratins.

Its function is as follows. In the hair cortex, hair keratin intermediate filaments are embedded in an interfilamentous matrix, consisting of hair keratin-associated proteins (KRTAP), which are essential for the formation of a rigid and resistant hair shaft through their extensive disulfide bond cross-linking with abundant cysteine residues of hair keratins. The matrix proteins include the high-sulfur and high-glycine-tyrosine keratins. The chain is Keratin-associated protein 9-8 (KRTAP9-8) from Homo sapiens (Human).